Here is an 89-residue protein sequence, read N- to C-terminus: Small ribosomal subunit protein uS15 (89 aa).

This sequence belongs to the universal ribosomal protein uS15 family. As to quaternary structure, part of the 30S ribosomal subunit. Forms a bridge to the 50S subunit in the 70S ribosome, contacting the 23S rRNA.

In terms of biological role, one of the primary rRNA binding proteins, it binds directly to 16S rRNA where it helps nucleate assembly of the platform of the 30S subunit by binding and bridging several RNA helices of the 16S rRNA. Functionally, forms an intersubunit bridge (bridge B4) with the 23S rRNA of the 50S subunit in the ribosome. The protein is Small ribosomal subunit protein uS15 of Chlorobium limicola (strain DSM 245 / NBRC 103803 / 6330).